Reading from the N-terminus, the 194-residue chain is Orotate phosphoribosyltransferase (194 aa).

5-phospho-alpha-D-ribose 1-diphosphate is bound by residues arginine 102, lysine 103, lysine 106, histidine 108, and 129–137 (EDVVTTGGS). 2 residues coordinate orotate: threonine 133 and arginine 161.

It belongs to the purine/pyrimidine phosphoribosyltransferase family. PyrE subfamily. In terms of assembly, homodimer. The cofactor is Mg(2+).

It catalyses the reaction orotidine 5'-phosphate + diphosphate = orotate + 5-phospho-alpha-D-ribose 1-diphosphate. It functions in the pathway pyrimidine metabolism; UMP biosynthesis via de novo pathway; UMP from orotate: step 1/2. Functionally, catalyzes the transfer of a ribosyl phosphate group from 5-phosphoribose 1-diphosphate to orotate, leading to the formation of orotidine monophosphate (OMP). This Prochlorococcus marinus (strain MIT 9211) protein is Orotate phosphoribosyltransferase.